Reading from the N-terminus, the 210-residue chain is uncharacterized protein (210 aa).

Ser-18, Ser-39, Ser-41, Ser-57, and Ser-60 each carry phosphoserine. Polar residues predominate over residues 33 to 46 (LDLDQRSMSPSNIA). Residues 33-58 (LDLDQRSMSPSNIASGEDRITRTNSG) form a disordered region. 2 disordered regions span residues 100 to 139 (YDHN…YKVS) and 177 to 210 (DSAP…NVHT). The segment covering 102–116 (HNNGTKSPTPKTSNM) has biased composition (polar residues). A compositionally biased stretch (basic and acidic residues) spans 130–139 (NDKDDKYKVS). Phosphoserine is present on residues Ser-178, Ser-189, and Ser-192. Over residues 191-210 (HSPSLNSMDNTTKHSSNVHT) the composition is skewed to polar residues.

This is an uncharacterized protein from Saccharomyces cerevisiae (strain ATCC 204508 / S288c) (Baker's yeast).